We begin with the raw amino-acid sequence, 348 residues long: MNLPKNGMTYADAGVDIDAGNALVDRIKPAAKRTNRSGVMAGLGGFGALFDLKDAGYTDPILVAATDGVGTKLRIAIDTGHVDGVGIDLVAMCVNDLVCQGAEPLFFLDYFATGALETDKAARIIEGIALGCERAGCALIGGETAEMPGMYPAGDFDLAGFSVGAMERGAALPAHVAQGDVLLGLASDGVHSNGYSLVRKLVEVSGLSWDAPCPWAEQSLGAELLTPTRLYVKQALAAIDAGGVHALAHITGGGLTENLPRVLPEGLGADIDLSTWSLPAVFGWMAQTGGMQEAEMLKTFNCGIGMILVVAQEEADKLTQLLASLGEDVARIGHVSAREGVRYSGTLL.

Belongs to the AIR synthase family.

It is found in the cytoplasm. The enzyme catalyses 2-formamido-N(1)-(5-O-phospho-beta-D-ribosyl)acetamidine + ATP = 5-amino-1-(5-phospho-beta-D-ribosyl)imidazole + ADP + phosphate + H(+). It functions in the pathway purine metabolism; IMP biosynthesis via de novo pathway; 5-amino-1-(5-phospho-D-ribosyl)imidazole from N(2)-formyl-N(1)-(5-phospho-D-ribosyl)glycinamide: step 2/2. This Roseobacter denitrificans (strain ATCC 33942 / OCh 114) (Erythrobacter sp. (strain OCh 114)) protein is Phosphoribosylformylglycinamidine cyclo-ligase.